The following is a 306-amino-acid chain: Protoheme IX farnesyltransferase (306 aa).

The next 8 helical transmembrane spans lie at 31 to 50 (VIELLLVTTAPVMILAQGGW), 55 to 77 (LILGVLVGGTLSAGSANAFNCYI), 104 to 124 (LVFAWIIGVASIIWLGVISNW), 125 to 145 (LAAALSLAAILFYVFVYTLWL), 168 to 188 (WAAVTGDISWAPVILFMIVFL), 218 to 235 (GRAAVGLQTILYSWATLA), 238 to 258 (LLLIPVAGMGLVYTLAALAGG), and 286 to 306 (ASISYLSLLFLAVGIDPLLPF).

This sequence belongs to the UbiA prenyltransferase family. Protoheme IX farnesyltransferase subfamily.

The protein resides in the cell membrane. It carries out the reaction heme b + (2E,6E)-farnesyl diphosphate + H2O = Fe(II)-heme o + diphosphate. It functions in the pathway porphyrin-containing compound metabolism; heme O biosynthesis; heme O from protoheme: step 1/1. Converts heme B (protoheme IX) to heme O by substitution of the vinyl group on carbon 2 of heme B porphyrin ring with a hydroxyethyl farnesyl side group. The protein is Protoheme IX farnesyltransferase of Clavibacter sepedonicus (Clavibacter michiganensis subsp. sepedonicus).